The following is a 419-amino-acid chain: MAYLFTSESVSEGHPDKIADQISDALLDNFLAFDGESKVACETMVTTGQVVLAGEVRSNTYLDVQNIARDVINDIGYTKGAYKFSGDSCGVISLIHEQSQDIYQGVDRGNKEEQGAGDQGMMFGYATNETENYMPLALDISHKILIELAKLRREGKEIEYLRPDSKSQVTIEYSDENVPERIVAIVVSTQHDDFDADDEKMLTKIKKDIIEILIPRVKKQLPEYVQKLFNDDIVYHINPTGKFVIGGPHGDAGLTGRKIIVDTYGGKGAHGGGAFSGKDPSKVDRSAAYASRHIAKNLVAAGVAPEILVQVSYAIGVVEPTSISVYTYGKNNTDLSDGQIAEKVKEIFDMRPSSIEDRLKLRNPIYRETAAYGHMGKEPRKVTKIFESPYKGKITREVELFTWEKLDYVDKVKDAFELN.

Residue His14 coordinates ATP. Asp16 is a binding site for Mg(2+). Residue Glu42 participates in K(+) binding. L-methionine-binding residues include Glu55 and Gln98. The flexible loop stretch occupies residues 98-108 (QSQDIYQGVDR). Residues 164-166 (DSK), 242-243 (KF), Asp251, 257-258 (RK), Ala274, and Lys278 each bind ATP. An L-methionine-binding site is contributed by Asp251. Lys282 contributes to the L-methionine binding site.

This sequence belongs to the AdoMet synthase family. In terms of assembly, homotetramer; dimer of dimers. The cofactor is Mg(2+). K(+) serves as cofactor.

It is found in the cytoplasm. The catalysed reaction is L-methionine + ATP + H2O = S-adenosyl-L-methionine + phosphate + diphosphate. The protein operates within amino-acid biosynthesis; S-adenosyl-L-methionine biosynthesis; S-adenosyl-L-methionine from L-methionine: step 1/1. Functionally, catalyzes the formation of S-adenosylmethionine (AdoMet) from methionine and ATP. The overall synthetic reaction is composed of two sequential steps, AdoMet formation and the subsequent tripolyphosphate hydrolysis which occurs prior to release of AdoMet from the enzyme. This is S-adenosylmethionine synthase from Christiangramia forsetii (strain DSM 17595 / CGMCC 1.15422 / KT0803) (Gramella forsetii).